Consider the following 393-residue polypeptide: S-adenosylmethionine synthase (393 aa).

Glutamate 9 serves as a coordination point for Mg(2+). Position 15 (histidine 15) interacts with ATP. Glutamate 43 provides a ligand contact to K(+). L-methionine contacts are provided by glutamate 56 and glutamine 99. ATP contacts are provided by residues 167–169 (DGK), 235–238 (SGRF), aspartate 246, 252–253 (RK), alanine 269, lysine 273, and lysine 277. Aspartate 246 serves as a coordination point for L-methionine. Position 277 (lysine 277) interacts with L-methionine.

Belongs to the AdoMet synthase family. As to quaternary structure, homotetramer. Requires Mn(2+) as cofactor. It depends on Mg(2+) as a cofactor. The cofactor is Co(2+). K(+) is required as a cofactor.

Its subcellular location is the cytoplasm. It catalyses the reaction L-methionine + ATP + H2O = S-adenosyl-L-methionine + phosphate + diphosphate. Its pathway is amino-acid biosynthesis; S-adenosyl-L-methionine biosynthesis; S-adenosyl-L-methionine from L-methionine: step 1/1. Functionally, catalyzes the formation of S-adenosylmethionine from methionine and ATP. The reaction comprises two steps that are both catalyzed by the same enzyme: formation of S-adenosylmethionine (AdoMet) and triphosphate, and subsequent hydrolysis of the triphosphate. This chain is S-adenosylmethionine synthase (SAMS), found in Solanum palustre (Non-tuber-performing potato).